Consider the following 350-residue polypeptide: Anthranilate phosphoribosyltransferase (350 aa).

5-phospho-alpha-D-ribose 1-diphosphate contacts are provided by residues Gly93, 96 to 97 (GD), Thr101, 103 to 106 (NIST), 121 to 129 (KHGNRSASG), and Ser133. Gly93 contributes to the anthranilate binding site. Residue Ser105 coordinates Mg(2+). Asn124 is an anthranilate binding site. Arg179 serves as a coordination point for anthranilate. Positions 238 and 239 each coordinate Mg(2+).

Belongs to the anthranilate phosphoribosyltransferase family. As to quaternary structure, homodimer. The cofactor is Mg(2+).

It catalyses the reaction N-(5-phospho-beta-D-ribosyl)anthranilate + diphosphate = 5-phospho-alpha-D-ribose 1-diphosphate + anthranilate. The protein operates within amino-acid biosynthesis; L-tryptophan biosynthesis; L-tryptophan from chorismate: step 2/5. Catalyzes the transfer of the phosphoribosyl group of 5-phosphorylribose-1-pyrophosphate (PRPP) to anthranilate to yield N-(5'-phosphoribosyl)-anthranilate (PRA). This is Anthranilate phosphoribosyltransferase from Parasynechococcus marenigrum (strain WH8102).